The following is a 206-amino-acid chain: Ras-related protein Rab7 (206 aa).

Residues 15–22 (GDSGVGKT), 63–67 (DTAGQ), and 125–128 (NKVD) each bind GTP. S-geranylgeranyl cysteine attachment occurs at residues C205 and C206.

The protein belongs to the small GTPase superfamily. Rab family.

The protein resides in the cell membrane. Its function is as follows. Protein transport. Probably involved in vesicular traffic. This chain is Ras-related protein Rab7, found in Cenchrus ciliaris (Buffelgrass).